The following is a 205-amino-acid chain: Thymidylate kinase (205 aa).

An ATP-binding site is contributed by 10–17 (GIDGAGKS).

The protein belongs to the thymidylate kinase family.

It carries out the reaction dTMP + ATP = dTDP + ADP. In terms of biological role, phosphorylation of dTMP to form dTDP in both de novo and salvage pathways of dTTP synthesis. The protein is Thymidylate kinase of Ralstonia pickettii (strain 12J).